A 261-amino-acid chain; its full sequence is X-box-binding protein 1 (261 aa).

The Cytoplasmic portion of the chain corresponds to M1–N185. Residues T27–P37 are compositionally biased toward low complexity. The segment at T27–T65 is disordered. S47 and S68 each carry phosphoserine. One can recognise a bZIP domain in the interval E70–L133. The basic motif stretch occupies residues K72–R94. The tract at residues R76–K92 is nuclear localization signal (NLS). The leucine-zipper stretch occupies residues L98–L133. Residues I186–S203 traverse the membrane as a helical; Signal-anchor for type II membrane protein segment. Over C204 to N261 the chain is Lumenal.

Belongs to the bZIP family. In terms of assembly, isoform 1 interacts with HM13. Isoform 1 interacts with RNF139; the interaction induces ubiquitination and degradation of isoform 1. Isoform 1 interacts (via luminal domain) with DERL1; the interaction obviates the need for ectodomain shedding prior HM13/SPP-mediated XBP1 isoform 1 cleavage. Isoform 1 interacts with HDAC3 and AKT1; the interactions occur in endothelial cell (EC) under disturbed flow. Isoform 1 interacts with the oncoprotein FOS. Interacts with SIRT1. Post-translationally, isoform 1 is ubiquitinated, leading to proteasome-mediated degradation in response to ER stress. In terms of processing, X-box-binding protein 1, cytoplasmic form and luminal form are produced by intramembrane proteolytic cleavage of ER membrane-anchored isoform 1 triggered by HM13/SPP in a DERL1-RNF139-dependent and VCP/p97-independent manner. X-box-binding protein 1, luminal form is ubiquitinated leading to proteasomal degradation. Acetylated by EP300; acetylation positively regulates the transcriptional activity of XBP1. Deacetylated by SIRT1; deacetylation negatively regulates the transcriptional activity of XBP1.

It is found in the nucleus. The protein resides in the endoplasmic reticulum. The protein localises to the cytoplasm. Its subcellular location is the endoplasmic reticulum membrane. It localises to the membrane. In terms of biological role, functions as a transcription factor during endoplasmic reticulum (ER) stress by regulating the unfolded protein response (UPR). Required for cardiac myogenesis and hepatogenesis during embryonic development, and the development of secretory tissues such as exocrine pancreas and salivary gland. Involved in terminal differentiation of B lymphocytes to plasma cells and production of immunoglobulins. Modulates the cellular response to ER stress in a PIK3R-dependent manner. Binds to the cis-acting X box present in the promoter regions of major histocompatibility complex class II genes. Involved in VEGF-induced endothelial cell (EC) proliferation and retinal blood vessel formation during embryonic development but also for angiogenesis in adult tissues under ischemic conditions. Functions also as a major regulator of the UPR in obesity-induced insulin resistance and type 2 diabetes for the management of obesity and diabetes prevention. Its function is as follows. Acts as a weak transcriptional factor. Together with HDAC3, contributes to the activation of NFE2L2-mediated HMOX1 transcription factor gene expression in a PI(3)K/mTORC2/Akt-dependent signaling pathway leading to EC survival under disturbed flow/oxidative stress. Binds to the ER stress response element (ERSE) upon ER stress. Binds to the consensus 5'-GATGACGTG[TG]N(3)[AT]T-3' sequence related to cAMP responsive element (CRE)-like sequences. Associates preferentially to the HDAC3 gene promoter region in a static flow-dependent manner. Binds to the CDH5/VE-cadherin gene promoter region. This Bos taurus (Bovine) protein is X-box-binding protein 1.